Reading from the N-terminus, the 368-residue chain is RNA polymerase sigma factor SigA (368 aa).

Residues 69–90 (LVNEKDSSDTDEKLNPSDLSAP) are disordered. Residues 71–83 (NEKDSSDTDEKLN) are compositionally biased toward basic and acidic residues. Residues 135–205 (LAEANLRLVV…TRAIADQART (71 aa)) are sigma-70 factor domain-2. The Interaction with polymerase core subunit RpoC motif lies at 159 to 162 (DLIQ). The segment at 214–290 (ETINKLIRVQ…DQEAQSPSDH (77 aa)) is sigma-70 factor domain-3. The interval 303–356 (VLDTLTDREENVLRLRFGLDDGRTRTLEEVGKVFGVTRERIRQIEAKALRKLRH) is sigma-70 factor domain-4. Positions 329 to 348 (LEEVGKVFGVTRERIRQIEA) form a DNA-binding region, H-T-H motif.

It belongs to the sigma-70 factor family. RpoD/SigA subfamily. In terms of assembly, interacts transiently with the RNA polymerase catalytic core.

The protein resides in the cytoplasm. Functionally, sigma factors are initiation factors that promote the attachment of RNA polymerase to specific initiation sites and are then released. This sigma factor is the primary sigma factor during exponential growth. The polypeptide is RNA polymerase sigma factor SigA (Staphylococcus aureus (strain N315)).